The primary structure comprises 880 residues: Alanine--tRNA ligase (880 aa).

His566, His570, Cys668, and His672 together coordinate Zn(2+).

The protein belongs to the class-II aminoacyl-tRNA synthetase family. The cofactor is Zn(2+).

It is found in the cytoplasm. The enzyme catalyses tRNA(Ala) + L-alanine + ATP = L-alanyl-tRNA(Ala) + AMP + diphosphate. Catalyzes the attachment of alanine to tRNA(Ala) in a two-step reaction: alanine is first activated by ATP to form Ala-AMP and then transferred to the acceptor end of tRNA(Ala). Also edits incorrectly charged Ser-tRNA(Ala) and Gly-tRNA(Ala) via its editing domain. This is Alanine--tRNA ligase from Alkaliphilus oremlandii (strain OhILAs) (Clostridium oremlandii (strain OhILAs)).